The following is a 442-amino-acid chain: Probable carboxypeptidase PAAG_00768 (442 aa).

The signal sequence occupies residues 1–20 (MKLQYLVALLFVQAVPPVTA). N-linked (GlcNAc...) asparagine glycosylation is present at Asn-102. Asp-160 is a binding site for Zn(2+). The active-site Proton acceptor is the Glu-192. Residue Glu-193 participates in Zn(2+) binding. Residue Asn-343 is glycosylated (N-linked (GlcNAc...) asparagine).

This sequence belongs to the peptidase M20A family. Zn(2+) serves as cofactor.

Its subcellular location is the secreted. The sequence is that of Probable carboxypeptidase PAAG_00768 from Paracoccidioides lutzii (strain ATCC MYA-826 / Pb01) (Paracoccidioides brasiliensis).